Consider the following 98-residue polypeptide: NADH-ubiquinone oxidoreductase chain 4L (98 aa).

3 consecutive transmembrane segments (helical) span residues 1-21 (MNLIDLILIAIYVIGISGLIF), 26-46 (IINILIISELNLGTLGMLFVL), and 61-81 (LYILTFTAAESAIGLAIVVIL).

This sequence belongs to the complex I subunit 4L family.

Its subcellular location is the mitochondrion membrane. The catalysed reaction is a ubiquinone + NADH + 5 H(+)(in) = a ubiquinol + NAD(+) + 4 H(+)(out). Core subunit of the mitochondrial membrane respiratory chain NADH dehydrogenase (Complex I) that is believed to belong to the minimal assembly required for catalysis. Complex I functions in the transfer of electrons from NADH to the respiratory chain. The immediate electron acceptor for the enzyme is believed to be ubiquinone. The polypeptide is NADH-ubiquinone oxidoreductase chain 4L (nad4L) (Dictyostelium citrinum (Slime mold)).